Consider the following 412-residue polypeptide: cAMP-dependent protein kinase regulatory subunit (412 aa).

The span at 1 to 11 shows a compositional bias: polar residues; sequence MSNYSHSSNNP. Positions 1–146 are disordered; sequence MSNYSHSSNN…TPPSHPKSEE (146 aa). Over residues 16–29 the composition is skewed to basic and acidic residues; it reads STKEDKPSSFHKIA. The interval 23 to 159 is dimerization and phosphorylation; sequence SSFHKIAEDE…RLKTAVSNNF (137 aa). Composition is skewed to polar residues over residues 49 to 60 and 119 to 138; these read NADNSAGGNNPL and TSVS…SWTP. Residue S120 is modified to Phosphoserine. 3',5'-cyclic AMP is bound by residues 160–291, E238, R247, 292–405, E359, and R368; these read LFSH…EEVP and LLSS…TEYS.

It belongs to the cAMP-dependent kinase regulatory chain family. In terms of assembly, tetramer, composed of 2 regulatory (R) and 2 catalytic (C) subunits. In the presence of cAMP it dissociates into 2 active monomeric C subunits and an R dimer.

This Emericella nidulans (strain FGSC A4 / ATCC 38163 / CBS 112.46 / NRRL 194 / M139) (Aspergillus nidulans) protein is cAMP-dependent protein kinase regulatory subunit (pkaR).